A 489-amino-acid chain; its full sequence is Major aspartyl peptidase 1 (489 aa).

Positions 1-16 (MHYLAVALPLLTLALA) are cleaved as a signal peptide. The Peptidase A1 domain maps to 101–432 (YAGQVSIGTP…RYNPAAIGFA (332 aa)). Aspartate 119 is an active-site residue. Glycine 121 is a binding site for pepstatin A. Cysteine 132 and cysteine 137 are joined by a disulfide. Pepstatin A is bound by residues threonine 161, glycine 163, and serine 164. Residue asparagine 266 is glycosylated (N-linked (GlcNAc...) asparagine). Tyrosine 286 serves as a coordination point for pepstatin A. Aspartate 317 is a catalytic residue. Positions 320 and 321 each coordinate pepstatin A. A disulfide bond links cysteine 357 and cysteine 391. The disordered stretch occupies residues 442 to 466 (AGNPSSSTTGGGTSGSNGGGSSSGA). The span at 450–463 (TGGGTSGSNGGGSS) shows a compositional bias: gly residues. The propeptide at 456-489 (GSNGGGSSSGAMERKGVQLGWLVGAVAVGVAAMI) is removed at pH 5.0; by autocatalysis.

This sequence belongs to the peptidase A1 family. In terms of assembly, monomer. Activated by the autocatalytic cleavage of the propeptide. Cleaved at the end of the propeptide promiscuously from residue 76 to residue 79. C-terminal cleavage by autocatalysis at Gly-456 at the pH optimum indicating a possible regulatory or other function of this propeptide.

It is found in the secreted. Its activity is regulated as follows. Activated by low pH. Inhibited by pepstatin A with an IC(50) of 1.4 nM. Inhibited by acetyl pepstatin. Inhibited by HIV antiretroviral therapy protease inhibitors including amprenavir and ritonavir. Inhibited by HIV-1 protease inhibitor brecanavir with an approximate IC(50) of 352 nM. Inhibited by HIV-1 protease inhibitors CGP53437 and GS-8374. From the tested peptidomimetic inhibitor molecules, macrocycles containing P2-P3' tethered side chains, statines in P1 and an alpha amino acid in P2' are the best. From the linear peptidomimetic inhibitors, the ones with a phenylstatine or hydroxyethylamine scissile bond isoster are better than compounds with a reduced bond or a homo-amide. Overall, inhibitors with a phenylalanine side chain, either unsubstituted or with a small substituent, is preferred in P1 while a bulkier P1 side chain leads to lower inhibition. Its function is as follows. Possesses prevalent extracellular endopeptidase activity at low pH condition. Required for high-density growth in acidic environments. Broad substrate specificity with preference cleavage of the peptide substrate between hydrophobic amino acids. Cleaves substrate at P1-P1' between Phe-Leu. Positively charged amino acids are preferred at P2. Prefers hydrophobic amino acids at the P3 and P4 positions. Cleaves substrate also at P1'-P2' between Leu-Val to some degree. Required for virulence in mouse inhalation model of infection. The sequence is that of Major aspartyl peptidase 1 from Cryptococcus neoformans var. grubii serotype A (strain H99 / ATCC 208821 / CBS 10515 / FGSC 9487) (Filobasidiella neoformans var. grubii).